We begin with the raw amino-acid sequence, 183 residues long: Beta-defensin 129 (183 aa).

A signal peptide spans 1–19 (MKLLFPVFASLMLQYQVNT). 3 cysteine pairs are disulfide-bonded: cysteine 27–cysteine 53, cysteine 34–cysteine 48, and cysteine 38–cysteine 54. The segment at 141-183 (TATSTKSNTKESRDSATASPPPAPPPPNILPTPSLELEKAEEQ) is disordered. Pro residues predominate over residues 159-170 (SPPPAPPPPNIL).

Belongs to the beta-defensin family.

The protein resides in the secreted. Its function is as follows. Has antibacterial activity. The sequence is that of Beta-defensin 129 (DEFB129) from Pongo pygmaeus (Bornean orangutan).